The chain runs to 206 residues: High frequency lysogenization protein HflD homolog (206 aa).

It belongs to the HflD family.

It localises to the cytoplasm. Its subcellular location is the cell inner membrane. This chain is High frequency lysogenization protein HflD homolog, found in Pseudomonas aeruginosa (strain LESB58).